The following is a 198-amino-acid chain: Pyridoxal 5'-phosphate synthase subunit PdxT (198 aa).

49 to 51 is an L-glutamine binding site; sequence GES. Cys81 functions as the Nucleophile in the catalytic mechanism. L-glutamine contacts are provided by residues Arg113 and 141 to 142; that span reads IR. Residues His177 and Glu179 each act as charge relay system in the active site.

The protein belongs to the glutaminase PdxT/SNO family. In terms of assembly, in the presence of PdxS, forms a dodecamer of heterodimers. Only shows activity in the heterodimer.

It catalyses the reaction aldehydo-D-ribose 5-phosphate + D-glyceraldehyde 3-phosphate + L-glutamine = pyridoxal 5'-phosphate + L-glutamate + phosphate + 3 H2O + H(+). The enzyme catalyses L-glutamine + H2O = L-glutamate + NH4(+). It functions in the pathway cofactor biosynthesis; pyridoxal 5'-phosphate biosynthesis. Its function is as follows. Catalyzes the hydrolysis of glutamine to glutamate and ammonia as part of the biosynthesis of pyridoxal 5'-phosphate. The resulting ammonia molecule is channeled to the active site of PdxS. The protein is Pyridoxal 5'-phosphate synthase subunit PdxT of Mycobacterium avium (strain 104).